The primary structure comprises 428 residues: Putative zinc metalloprotease LL2128 (428 aa).

His19 contributes to the Zn(2+) binding site. Glu20 is an active-site residue. Zn(2+) is bound at residue His23. 3 helical membrane-spanning segments follow: residues 188–210 (GPLN…QGGV), 354–376 (IVYL…IPVL), and 401–423 (IITM…NDIL). In terms of domain architecture, PDZ spans 188–282 (GPLNNFILGI…SETLSVTPKK (95 aa)).

The protein belongs to the peptidase M50B family. Zn(2+) is required as a cofactor.

It is found in the cell membrane. The sequence is that of Putative zinc metalloprotease LL2128 from Lactococcus lactis subsp. lactis (strain IL1403) (Streptococcus lactis).